The sequence spans 691 residues: DNA ligase (691 aa).

Residues 41–45 (DAEYD), 90–91 (SL), and Glu-130 contribute to the NAD(+) site. Lys-132 (N6-AMP-lysine intermediate) is an active-site residue. Positions 153, 190, 307, and 331 each coordinate NAD(+). Zn(2+)-binding residues include Cys-425, Cys-428, Cys-443, and Cys-449. The region spanning 610 to 691 (APQGVLAGKT…MHKLLEGHAR (82 aa)) is the BRCT domain.

The protein belongs to the NAD-dependent DNA ligase family. LigA subfamily. It depends on Mg(2+) as a cofactor. The cofactor is Mn(2+).

The enzyme catalyses NAD(+) + (deoxyribonucleotide)n-3'-hydroxyl + 5'-phospho-(deoxyribonucleotide)m = (deoxyribonucleotide)n+m + AMP + beta-nicotinamide D-nucleotide.. Its function is as follows. DNA ligase that catalyzes the formation of phosphodiester linkages between 5'-phosphoryl and 3'-hydroxyl groups in double-stranded DNA using NAD as a coenzyme and as the energy source for the reaction. It is essential for DNA replication and repair of damaged DNA. In Burkholderia thailandensis (strain ATCC 700388 / DSM 13276 / CCUG 48851 / CIP 106301 / E264), this protein is DNA ligase.